Here is a 643-residue protein sequence, read N- to C-terminus: Threonine--tRNA ligase 1 (643 aa).

The 62-residue stretch at 3–64 (DMVKITFPDG…NEDGTVEIIT (62 aa)) folds into the TGS domain. The tract at residues 245-542 (DHRKLGKELK…LIEEHKGALP (298 aa)) is catalytic. The Zn(2+) site is built by C338, H389, and H519.

It belongs to the class-II aminoacyl-tRNA synthetase family. In terms of assembly, homodimer. Requires Zn(2+) as cofactor.

It localises to the cytoplasm. It catalyses the reaction tRNA(Thr) + L-threonine + ATP = L-threonyl-tRNA(Thr) + AMP + diphosphate + H(+). Catalyzes the attachment of threonine to tRNA(Thr) in a two-step reaction: L-threonine is first activated by ATP to form Thr-AMP and then transferred to the acceptor end of tRNA(Thr). Also edits incorrectly charged L-seryl-tRNA(Thr). The polypeptide is Threonine--tRNA ligase 1 (thrS) (Bacillus subtilis (strain 168)).